A 202-amino-acid polypeptide reads, in one-letter code: LexA repressor (202 aa).

A DNA-binding region (H-T-H motif) is located at residues Arg28–Lys48. Residues Ser119 and Lys156 each act as for autocatalytic cleavage activity in the active site.

This sequence belongs to the peptidase S24 family. In terms of assembly, homodimer.

The catalysed reaction is Hydrolysis of Ala-|-Gly bond in repressor LexA.. Functionally, represses a number of genes involved in the response to DNA damage (SOS response), including recA and lexA. Binds to the 16 bp palindromic sequence 5'-CTGTATATATATACAG-3'. In the presence of single-stranded DNA, RecA interacts with LexA causing an autocatalytic cleavage which disrupts the DNA-binding part of LexA, leading to derepression of the SOS regulon and eventually DNA repair. This chain is LexA repressor, found in Erwinia tasmaniensis (strain DSM 17950 / CFBP 7177 / CIP 109463 / NCPPB 4357 / Et1/99).